A 259-amino-acid chain; its full sequence is Exosome complex component Rrp42 (259 aa).

This sequence belongs to the RNase PH family. Rrp42 subfamily. In terms of assembly, component of the archaeal exosome complex. Forms a hexameric ring-like arrangement composed of 3 Rrp41-Rrp42 heterodimers. The hexameric ring associates with a trimer of Rrp4 and/or Csl4 subunits.

The protein resides in the cytoplasm. In terms of biological role, non-catalytic component of the exosome, which is a complex involved in RNA degradation. Contributes to the structuring of the Rrp41 active site. This Archaeoglobus fulgidus (strain ATCC 49558 / DSM 4304 / JCM 9628 / NBRC 100126 / VC-16) protein is Exosome complex component Rrp42.